A 621-amino-acid polypeptide reads, in one-letter code: 1-deoxy-D-xylulose-5-phosphate synthase (621 aa).

Thiamine diphosphate-binding positions include H80 and 121–123 (GHS). Mg(2+) is bound at residue D152. Thiamine diphosphate-binding positions include 153-154 (GA), N181, Y288, and E370. Residue N181 coordinates Mg(2+).

Belongs to the transketolase family. DXPS subfamily. Homodimer. The cofactor is Mg(2+). Thiamine diphosphate serves as cofactor.

It catalyses the reaction D-glyceraldehyde 3-phosphate + pyruvate + H(+) = 1-deoxy-D-xylulose 5-phosphate + CO2. The protein operates within metabolic intermediate biosynthesis; 1-deoxy-D-xylulose 5-phosphate biosynthesis; 1-deoxy-D-xylulose 5-phosphate from D-glyceraldehyde 3-phosphate and pyruvate: step 1/1. Its function is as follows. Catalyzes the acyloin condensation reaction between C atoms 2 and 3 of pyruvate and glyceraldehyde 3-phosphate to yield 1-deoxy-D-xylulose-5-phosphate (DXP). The sequence is that of 1-deoxy-D-xylulose-5-phosphate synthase from Shewanella sediminis (strain HAW-EB3).